The sequence spans 140 residues: ATP synthase epsilon chain (140 aa).

The protein belongs to the ATPase epsilon chain family. In terms of assembly, F-type ATPases have 2 components, CF(1) - the catalytic core - and CF(0) - the membrane proton channel. CF(1) has five subunits: alpha(3), beta(3), gamma(1), delta(1), epsilon(1). CF(0) has three main subunits: a, b and c.

The protein resides in the cell inner membrane. Functionally, produces ATP from ADP in the presence of a proton gradient across the membrane. The chain is ATP synthase epsilon chain from Nitrosomonas eutropha (strain DSM 101675 / C91 / Nm57).